The primary structure comprises 426 residues: Actin-like protein 6B (426 aa).

Residues 39-82 (TTVGLLAAEEGGGLELEGEKEKKGKIFHIDTNALHVPRDGAEVM) form an essential for mediating its function in dendritic development; may contribute to neuronal-specific targeting region.

It belongs to the actin family. As to quaternary structure, component of the multiprotein chromatin-remodeling complexes SWI/SNF: SWI/SNF-A (BAF), SWI/SNF-B (PBAF) and related complexes. The canonical complex contains a catalytic subunit (either SMARCA4/BRG1/BAF190A or SMARCA2/BRM/BAF190B) and at least SMARCE1, ACTL6A/BAF53, SMARCC1/BAF155, SMARCC2/BAF170, and SMARCB1/SNF5/BAF47. Other subunits specific to each of the complexes may also be present permitting several possible combinations developmentally and tissue specific. Component of the BAF complex, which includes at least actin (ACTB), ARID1A/BAF250A, ARID1B/BAF250B, SMARCA2/BRM, SMARCA4/BRG1/BAF190A, ACTL6A/BAF53, ACTL6B/BAF53B, SMARCE1/BAF57, SMARCC1/BAF155, SMARCC2/BAF170, SMARCB1/SNF5/INI1, and one or more SMARCD1/BAF60A, SMARCD2/BAF60B, or SMARCD3/BAF60C. Component of neuron-specific chromatin remodeling complex (nBAF complex) composed of at least, ARID1A/BAF250A or ARID1B/BAF250B, SMARCD1/BAF60A or SMARCD2/BAF60B or SMARCD3/BAF60C, SMARCA2/BRM/BAF190B, SMARCA4/BRG1/BAF190A, SMARCB1/BAF47, SMARCC1/BAF155, SMARCE1/BAF57, SMARCC2/BAF170, DPF1/BAF45B, DPF3/BAF45C, ACTL6B/BAF53B and actin (ACTB). Note that the nBAF complex is polymorphic in regard to the ATPase, SMARCA2 and SMARCA4 occupying mutually exclusive positions. May be a component of the SWI/SNF-B (PBAF) chromatin remodeling complex, at least composed of SMARCA4/BRG1, SMARCB1/BAF47/SNF5, ACTL6A/BAF53A or ACTL6B/BAF53B, SMARCE1/BAF57, SMARCD1/BAF60A, SMARCD2/BAF60B, perhaps SMARCD3/BAF60C, SMARCC1/BAF155, SMARCC2/BAF170, PBRM1/BAF180, ARID2/BAF200 and actin.

The protein localises to the nucleus. Functionally, involved in transcriptional activation and repression of select genes by chromatin remodeling (alteration of DNA-nucleosome topology). Component of SWI/SNF chromatin remodeling complexes that carry out key enzymatic activities, changing chromatin structure by altering DNA-histone contacts within a nucleosome in an ATP-dependent manner. Belongs to the neuron-specific chromatin remodeling complex (nBAF complex), as such plays a role in remodeling mononucleosomes in an ATP-dependent fashion, and is required for postmitotic neural development and dendritic outgrowth. During neural development a switch from a stem/progenitor to a postmitotic chromatin remodeling mechanism occurs as neurons exit the cell cycle and become committed to their adult state. The transition from proliferating neural stem/progenitor cells to postmitotic neurons requires a switch in subunit composition of the npBAF and nBAF complexes. As neural progenitors exit mitosis and differentiate into neurons, npBAF complexes which contain ACTL6A/BAF53A and PHF10/BAF45A, are exchanged for homologous alternative ACTL6B/BAF53B and DPF1/BAF45B or DPF3/BAF45C subunits in neuron-specific complexes (nBAF). The npBAF complex is essential for the self-renewal/proliferative capacity of the multipotent neural stem cells. The nBAF complex along with CREST plays a role regulating the activity of genes essential for dendrite growth. ACTL6B/BAF53B is not essential for assembly of the nBAF complex but is required for targeting the complex and CREST to the promoter of genes essential for dendritic growth. Essential for neuronal maturation and dendrite development. This Bos taurus (Bovine) protein is Actin-like protein 6B (ACTL6B).